Consider the following 222-residue polypeptide: Deoxyribose-phosphate aldolase (222 aa).

Asp-94 serves as the catalytic Proton donor/acceptor. Catalysis depends on Lys-156, which acts as the Schiff-base intermediate with acetaldehyde. Lys-185 serves as the catalytic Proton donor/acceptor.

This sequence belongs to the DeoC/FbaB aldolase family. DeoC type 1 subfamily.

It is found in the cytoplasm. The enzyme catalyses 2-deoxy-D-ribose 5-phosphate = D-glyceraldehyde 3-phosphate + acetaldehyde. It participates in carbohydrate degradation; 2-deoxy-D-ribose 1-phosphate degradation; D-glyceraldehyde 3-phosphate and acetaldehyde from 2-deoxy-alpha-D-ribose 1-phosphate: step 2/2. Functionally, catalyzes a reversible aldol reaction between acetaldehyde and D-glyceraldehyde 3-phosphate to generate 2-deoxy-D-ribose 5-phosphate. The sequence is that of Deoxyribose-phosphate aldolase from Malacoplasma penetrans (strain HF-2) (Mycoplasma penetrans).